The chain runs to 339 residues: Bifunctional phosphoglucose/phosphomannose isomerase (339 aa).

Residues 22-164 (ISVNVKAEDI…IEPVDDQIEE (143 aa)) form the SIS domain. Residues Gly-41, Ser-42, Ser-83, Ser-85, Thr-88, and Arg-135 each coordinate D-fructose 6-phosphate. The Proton acceptor role is filled by Glu-221. The D-fructose 6-phosphate site is built by His-237 and Lys-331. His-237 acts as the Proton donor in catalysis. Lys-331 serves as the catalytic Proton acceptor.

The protein belongs to the PGI/PMI family. Homodimer.

It catalyses the reaction alpha-D-glucose 6-phosphate = beta-D-fructose 6-phosphate. The catalysed reaction is D-mannose 6-phosphate = D-fructose 6-phosphate. Its function is as follows. Dual specificity isomerase that catalyzes the isomerization of both glucose-6-phosphate and mannose-6-phosphate to fructose-6-phosphate. This chain is Bifunctional phosphoglucose/phosphomannose isomerase, found in Caldicellulosiruptor bescii (strain ATCC BAA-1888 / DSM 6725 / KCTC 15123 / Z-1320) (Anaerocellum thermophilum).